The chain runs to 220 residues: Thiamine-phosphate synthase (220 aa).

Residues 39–43 (QLRDK) and asparagine 80 contribute to the 4-amino-2-methyl-5-(diphosphooxymethyl)pyrimidine site. Aspartate 81 and aspartate 100 together coordinate Mg(2+). Serine 119 serves as a coordination point for 4-amino-2-methyl-5-(diphosphooxymethyl)pyrimidine. 145-147 (TPT) is a binding site for 2-[(2R,5Z)-2-carboxy-4-methylthiazol-5(2H)-ylidene]ethyl phosphate. Lysine 148 contacts 4-amino-2-methyl-5-(diphosphooxymethyl)pyrimidine. Glycine 176 lines the 2-[(2R,5Z)-2-carboxy-4-methylthiazol-5(2H)-ylidene]ethyl phosphate pocket.

Belongs to the thiamine-phosphate synthase family. Mg(2+) serves as cofactor.

It carries out the reaction 2-[(2R,5Z)-2-carboxy-4-methylthiazol-5(2H)-ylidene]ethyl phosphate + 4-amino-2-methyl-5-(diphosphooxymethyl)pyrimidine + 2 H(+) = thiamine phosphate + CO2 + diphosphate. It catalyses the reaction 2-(2-carboxy-4-methylthiazol-5-yl)ethyl phosphate + 4-amino-2-methyl-5-(diphosphooxymethyl)pyrimidine + 2 H(+) = thiamine phosphate + CO2 + diphosphate. The enzyme catalyses 4-methyl-5-(2-phosphooxyethyl)-thiazole + 4-amino-2-methyl-5-(diphosphooxymethyl)pyrimidine + H(+) = thiamine phosphate + diphosphate. The protein operates within cofactor biosynthesis; thiamine diphosphate biosynthesis; thiamine phosphate from 4-amino-2-methyl-5-diphosphomethylpyrimidine and 4-methyl-5-(2-phosphoethyl)-thiazole: step 1/1. In terms of biological role, condenses 4-methyl-5-(beta-hydroxyethyl)thiazole monophosphate (THZ-P) and 2-methyl-4-amino-5-hydroxymethyl pyrimidine pyrophosphate (HMP-PP) to form thiamine monophosphate (TMP). In Mycobacterium marinum (strain ATCC BAA-535 / M), this protein is Thiamine-phosphate synthase.